The chain runs to 122 residues: Large ribosomal subunit protein uL14 (122 aa).

It belongs to the universal ribosomal protein uL14 family. As to quaternary structure, part of the 50S ribosomal subunit. Forms a cluster with proteins L3 and L19. In the 70S ribosome, L14 and L19 interact and together make contacts with the 16S rRNA in bridges B5 and B8.

In terms of biological role, binds to 23S rRNA. Forms part of two intersubunit bridges in the 70S ribosome. The protein is Large ribosomal subunit protein uL14 of Mycolicibacterium gilvum (strain PYR-GCK) (Mycobacterium gilvum (strain PYR-GCK)).